The chain runs to 273 residues: Putative phosphoenolpyruvate synthase regulatory protein (273 aa).

153-160 (AVSRAGKT) is an ADP binding site.

This sequence belongs to the pyruvate, phosphate/water dikinase regulatory protein family. PSRP subfamily.

The enzyme catalyses [pyruvate, water dikinase] + ADP = [pyruvate, water dikinase]-phosphate + AMP + H(+). It carries out the reaction [pyruvate, water dikinase]-phosphate + phosphate + H(+) = [pyruvate, water dikinase] + diphosphate. Its function is as follows. Bifunctional serine/threonine kinase and phosphorylase involved in the regulation of the phosphoenolpyruvate synthase (PEPS) by catalyzing its phosphorylation/dephosphorylation. This chain is Putative phosphoenolpyruvate synthase regulatory protein, found in Xylella fastidiosa (strain 9a5c).